A 122-amino-acid polypeptide reads, in one-letter code: Large ribosomal subunit protein uL14 (122 aa).

It belongs to the universal ribosomal protein uL14 family. In terms of assembly, part of the 50S ribosomal subunit. Forms a cluster with proteins L3 and L19. In the 70S ribosome, L14 and L19 interact and together make contacts with the 16S rRNA in bridges B5 and B8.

Its function is as follows. Binds to 23S rRNA. Forms part of two intersubunit bridges in the 70S ribosome. This Chlamydia trachomatis serovar L2 (strain ATCC VR-902B / DSM 19102 / 434/Bu) protein is Large ribosomal subunit protein uL14.